A 287-amino-acid chain; its full sequence is Undecaprenyl-diphosphatase (287 aa).

A run of 7 helical transmembrane segments spans residues 6–26 (LHLL…FIPV), 45–65 (SGKV…MWIF), 89–109 (NLLL…KSIK), 111–131 (VFYH…IMLW), 204–224 (ATEF…VYDL), 238–258 (AIAV…RAVL), and 266–286 (YRVF…WIYA).

It belongs to the UppP family.

Its subcellular location is the cell inner membrane. It carries out the reaction di-trans,octa-cis-undecaprenyl diphosphate + H2O = di-trans,octa-cis-undecaprenyl phosphate + phosphate + H(+). Its function is as follows. Catalyzes the dephosphorylation of undecaprenyl diphosphate (UPP). Confers resistance to bacitracin. The polypeptide is Undecaprenyl-diphosphatase (Bordetella pertussis (strain Tohama I / ATCC BAA-589 / NCTC 13251)).